We begin with the raw amino-acid sequence, 413 residues long: Elongation factor 1-alpha (413 aa).

Positions K5 to V211 constitute a tr-type G domain. The segment at G14–S21 is G1. G14–S21 serves as a coordination point for GTP. Residue S21 participates in Mg(2+) binding. A G2 region spans residues G60–D64. Residues D81 to G84 are G3. Residues D81–H85 and N136–D139 contribute to the GTP site. Residues N136–D139 are G4. A G5 region spans residues S175 to F177.

It belongs to the TRAFAC class translation factor GTPase superfamily. Classic translation factor GTPase family. EF-Tu/EF-1A subfamily.

It localises to the cytoplasm. The enzyme catalyses GTP + H2O = GDP + phosphate + H(+). Its function is as follows. GTP hydrolase that promotes the GTP-dependent binding of aminoacyl-tRNA to the A-site of ribosomes during protein biosynthesis. In Methanosphaera stadtmanae (strain ATCC 43021 / DSM 3091 / JCM 11832 / MCB-3), this protein is Elongation factor 1-alpha.